A 236-amino-acid chain; its full sequence is MPISVDKAVIARLKVHGETFEILVDPYLARDFKEGKEVPIEEILATPYVFKDAHKGDKASEKEMEKIFGTSDPYEVAKIILRKGEVQLTAQQRREMLEEKKRQIATIIHRHAVDPRTGYPHPVDRILRAMEEVGVRVDIFKDAEAQVQDVIKAIRRILPLRIEMKVIAVKIPSEYVGRAYGEVRKFGRIKKEEWASDGSWLFLIEIPGGVEEEFYEKLNALTKGNAQTKLIERKGL.

Belongs to the SDO1/SBDS family.

The polypeptide is Ribosome maturation protein SDO1 homolog (Pyrococcus abyssi (strain GE5 / Orsay)).